A 275-amino-acid polypeptide reads, in one-letter code: Ribosomal protein L11 methyltransferase (275 aa).

S-adenosyl-L-methionine contacts are provided by Thr123, Gly146, Asp167, and Asn208.

Belongs to the methyltransferase superfamily. PrmA family.

Its subcellular location is the cytoplasm. It catalyses the reaction L-lysyl-[protein] + 3 S-adenosyl-L-methionine = N(6),N(6),N(6)-trimethyl-L-lysyl-[protein] + 3 S-adenosyl-L-homocysteine + 3 H(+). Functionally, methylates ribosomal protein L11. The sequence is that of Ribosomal protein L11 methyltransferase from Campylobacter fetus subsp. fetus (strain 82-40).